A 172-amino-acid chain; its full sequence is Small ribosomal subunit protein uS5 (172 aa).

Residues 17-80 (LREKMIAINR…EEARRNLAKI (64 aa)) form the S5 DRBM domain.

This sequence belongs to the universal ribosomal protein uS5 family. As to quaternary structure, part of the 30S ribosomal subunit. Contacts proteins S4 and S8.

Its function is as follows. With S4 and S12 plays an important role in translational accuracy. Functionally, located at the back of the 30S subunit body where it stabilizes the conformation of the head with respect to the body. The protein is Small ribosomal subunit protein uS5 of Variovorax paradoxus (strain S110).